We begin with the raw amino-acid sequence, 647 residues long: Calmodulin-binding protein 60 B (647 aa).

Polar residues predominate over residues 1–10 (MMDSGNNNMN). The tract at residues 1-26 (MMDSGNNNMNRAKRNLDGNDDDQPER) is disordered. The segment at 8–85 (NMNRAKRNLD…TGSSGSSPKR (78 aa)) is calmodulin-binding. Residues 12 to 19 (AKRNLDGN) carry the Nuclear localization signal motif. Residues 155–278 (EDDEDWTQEE…AFHKKLTAEG (124 aa)) form a DNA-binding region.

This sequence belongs to the plant ACBP60 protein family. Interacts with calmodulin (CaM). As to expression, expressed in leaves, stems, flowers, developing seeds and root.

The protein resides in the nucleus. Functionally, transcription activator that binds DNA in a sequence-specific manner, likely 5'-GAAATTTTGG-3', to promote the expression of target genes. In Arabidopsis thaliana (Mouse-ear cress), this protein is Calmodulin-binding protein 60 B.